A 168-amino-acid polypeptide reads, in one-letter code: GTP-dependent dephospho-CoA kinase (168 aa).

Positions 49, 50, 51, 68, 70, and 120 each coordinate GTP.

The protein belongs to the GTP-dependent DPCK family.

It carries out the reaction 3'-dephospho-CoA + GTP = GDP + CoA + H(+). It functions in the pathway cofactor biosynthesis; coenzyme A biosynthesis. Its function is as follows. Catalyzes the GTP-dependent phosphorylation of the 3'-hydroxyl group of dephosphocoenzyme A to form coenzyme A (CoA). In Pyrobaculum neutrophilum (strain DSM 2338 / JCM 9278 / NBRC 100436 / V24Sta) (Thermoproteus neutrophilus), this protein is GTP-dependent dephospho-CoA kinase.